A 564-amino-acid chain; its full sequence is NAD-dependent malic enzyme (564 aa).

The active-site Proton donor is the Y104. Residue R157 coordinates NAD(+). K175 serves as the catalytic Proton acceptor. The a divalent metal cation site is built by E246, D247, and D270. NAD(+) contacts are provided by D270 and N417.

The protein belongs to the malic enzymes family. In terms of assembly, homotetramer. Mg(2+) serves as cofactor. The cofactor is Mn(2+).

The catalysed reaction is (S)-malate + NAD(+) = pyruvate + CO2 + NADH. It carries out the reaction oxaloacetate + H(+) = pyruvate + CO2. In Aeromonas hydrophila subsp. hydrophila (strain ATCC 7966 / DSM 30187 / BCRC 13018 / CCUG 14551 / JCM 1027 / KCTC 2358 / NCIMB 9240 / NCTC 8049), this protein is NAD-dependent malic enzyme.